The sequence spans 324 residues: Glyoxylate/hydroxypyruvate reductase B (324 aa).

Residues arginine 237 and glutamate 266 contribute to the active site. The Proton donor role is filled by histidine 285.

It belongs to the D-isomer specific 2-hydroxyacid dehydrogenase family. GhrB subfamily. Homodimer.

Its subcellular location is the cytoplasm. The catalysed reaction is glycolate + NADP(+) = glyoxylate + NADPH + H(+). It catalyses the reaction (R)-glycerate + NAD(+) = 3-hydroxypyruvate + NADH + H(+). It carries out the reaction (R)-glycerate + NADP(+) = 3-hydroxypyruvate + NADPH + H(+). Functionally, catalyzes the NADPH-dependent reduction of glyoxylate and hydroxypyruvate into glycolate and glycerate, respectively. The polypeptide is Glyoxylate/hydroxypyruvate reductase B (Escherichia coli (strain K12 / MC4100 / BW2952)).